Here is a 479-residue protein sequence, read N- to C-terminus: Glutathione gamma-glutamylcysteinyltransferase 3 (479 aa).

Residues 1–221 (MASAGLYRRV…GYMIISKLKR (221 aa)) form the Peptidase C83 domain. Active-site residues include C56, H162, and D180.

This sequence belongs to the phytochelatin synthase family. In terms of tissue distribution, expressed in roots, nodules and leaves.

The enzyme catalyses [Glu(-Cys)](n)-Gly + glutathione + H(+) = [Glu(-Cys)](n+1)-Gly + glycine. With respect to regulation, requires cadmium for activity. Its function is as follows. Involved in the synthesis of phytochelatins (PC) and homophytochelatins (hPC), the heavy-metal-binding peptides of plants. This Lotus japonicus (Lotus corniculatus var. japonicus) protein is Glutathione gamma-glutamylcysteinyltransferase 3 (PCS3).